Here is a 219-residue protein sequence, read N- to C-terminus: Putative zinc metalloprotease YwhC (219 aa).

The helical transmembrane segment at 4–24 (FLYYPLSLMPYLVITLIVSFT) threads the bilayer. Residue H26 coordinates Zn(2+). E27 is a catalytic residue. H30 serves as a coordination point for Zn(2+). 4 consecutive transmembrane segments (helical) span residues 52-72 (PIKHLDPFGTILILVAGFGWA), 94-114 (IAGPVSNLILAFIGFFLLVLM), 132-152 (FFSIWIQLNLVLFLFNLLPLP), and 180-200 (FIVFLVLFVTPLGSYVLWPML).

Belongs to the peptidase M50B family. Zn(2+) serves as cofactor.

The protein resides in the cell membrane. The protein is Putative zinc metalloprotease YwhC (ywhC) of Bacillus subtilis (strain 168).